Here is a 672-residue protein sequence, read N- to C-terminus: Negative growth regulatory protein NGR1 (672 aa).

Methionine 1 bears the N-acetylmethionine mark. Composition is skewed to polar residues over residues methionine 1–glutamate 13 and serine 23–proline 32. 2 disordered regions span residues methionine 1–aspartate 40 and serine 77–aspartate 102. Methionine 2 is modified (N-acetylserine). 3 RRM domains span residues leucine 36–threonine 159, phenylalanine 192–proline 271, and threonine 360–proline 432. Residues serine 77–serine 96 are compositionally biased toward low complexity. Position 524 is a phosphoserine (serine 524). The disordered stretch occupies residues leucine 640 to histidine 672. Residues asparagine 645–lysine 656 show a composition bias toward low complexity.

Functionally, may be an RNA-binding protein involved in control of an RNA processing pathway that influences the regulation of cell growth in early log phase. Can bind to RNA and single-stranded DNA but not double-stranded DNA. In Saccharomyces cerevisiae (strain ATCC 204508 / S288c) (Baker's yeast), this protein is Negative growth regulatory protein NGR1 (NGR1).